A 353-amino-acid polypeptide reads, in one-letter code: 2,4-diaminopentanoate dehydrogenase (353 aa).

The protein belongs to the DapB family. As to quaternary structure, homodimer.

It catalyses the reaction (2R,4S)-2,4-diaminopentanoate + NAD(+) + H2O = (2R)-2-amino-4-oxopentanoate + NH4(+) + NADH + H(+). The catalysed reaction is (2R,4S)-2,4-diaminopentanoate + NADP(+) + H2O = (2R)-2-amino-4-oxopentanoate + NH4(+) + NADPH + H(+). Inhibited by p-chloromercuribenzoate, iodoacetate and N-ethylmaleimide. Its function is as follows. Involved in the ornithine fermentation pathway. Catalyzes the oxidative deamination of (2R,4S)-2,4-diaminopentanoate (DAP) to yield 2-amino-4-ketopentanoate (AKP). The sequence is that of 2,4-diaminopentanoate dehydrogenase from Acetoanaerobium sticklandii (strain ATCC 12662 / DSM 519 / JCM 1433 / CCUG 9281 / NCIMB 10654 / HF) (Clostridium sticklandii).